A 306-amino-acid polypeptide reads, in one-letter code: Glutaminase (306 aa).

Residues Ser62, Asn114, Glu159, Asn166, Tyr190, Tyr242, and Val260 each coordinate substrate.

Belongs to the glutaminase family. Homotetramer.

It carries out the reaction L-glutamine + H2O = L-glutamate + NH4(+). This chain is Glutaminase, found in Clostridium tetani (strain Massachusetts / E88).